Reading from the N-terminus, the 256-residue chain is Small ribosomal subunit protein uS2 (256 aa).

Belongs to the universal ribosomal protein uS2 family.

The protein is Small ribosomal subunit protein uS2 of Brucella anthropi (strain ATCC 49188 / DSM 6882 / CCUG 24695 / JCM 21032 / LMG 3331 / NBRC 15819 / NCTC 12168 / Alc 37) (Ochrobactrum anthropi).